A 145-amino-acid polypeptide reads, in one-letter code: UPF0260 protein VV2402 (145 aa).

Belongs to the UPF0260 family.

The sequence is that of UPF0260 protein VV2402 from Vibrio vulnificus (strain YJ016).